Here is a 229-residue protein sequence, read N- to C-terminus: Uracil-DNA glycosylase (229 aa).

Asp-65 acts as the Proton acceptor in catalysis.

The protein belongs to the uracil-DNA glycosylase (UDG) superfamily. UNG family.

Its subcellular location is the cytoplasm. It catalyses the reaction Hydrolyzes single-stranded DNA or mismatched double-stranded DNA and polynucleotides, releasing free uracil.. Functionally, excises uracil residues from the DNA which can arise as a result of misincorporation of dUMP residues by DNA polymerase or due to deamination of cytosine. The polypeptide is Uracil-DNA glycosylase (Brevibacillus brevis (strain 47 / JCM 6285 / NBRC 100599)).